A 403-amino-acid chain; its full sequence is Cytochrome P450-SU2 (403 aa).

A disordered region spans residues 1–24 (MTTAERTAPPDALTVPASRAPGCP). Cysteine 352 is a binding site for heme.

This sequence belongs to the cytochrome P450 family. The cofactor is heme.

Metabolism of a number of sulfonylurea herbicides. In Streptomyces griseolus, this protein is Cytochrome P450-SU2 (cyp105B1).